The chain runs to 275 residues: Chemotaxis protein methyltransferase Cher2 (275 aa).

Residues 1 to 275 (MSTGNLDFEQ…CSPGIIYQAK (275 aa)) enclose the CheR-type methyltransferase domain. S-adenosyl-L-methionine contacts are provided by residues Asn73, Thr75, Arg79, Glu116, Asp145, 201–202 (NL), and 218–219 (RN).

In terms of assembly, monomer.

It catalyses the reaction L-glutamyl-[protein] + S-adenosyl-L-methionine = [protein]-L-glutamate 5-O-methyl ester + S-adenosyl-L-homocysteine. Methylation of the membrane-bound methyl-accepting chemotaxis proteins (MCP) to form gamma-glutamyl methyl ester residues in MCP. Methylates the McpS chemotaxis receptor. The polypeptide is Chemotaxis protein methyltransferase Cher2 (cheR2) (Pseudomonas putida (strain ATCC 47054 / DSM 6125 / CFBP 8728 / NCIMB 11950 / KT2440)).